We begin with the raw amino-acid sequence, 363 residues long: Peptide chain release factor 2 (363 aa).

Residue Gln-251 is modified to N5-methylglutamine.

It belongs to the prokaryotic/mitochondrial release factor family. Post-translationally, methylated by PrmC. Methylation increases the termination efficiency of RF2.

It localises to the cytoplasm. Functionally, peptide chain release factor 2 directs the termination of translation in response to the peptide chain termination codons UGA and UAA. The chain is Peptide chain release factor 2 (prfB) from Helicobacter pylori (strain J99 / ATCC 700824) (Campylobacter pylori J99).